The chain runs to 570 residues: 15-cis-phytoene desaturase, chloroplastic/chromoplastic (570 aa).

Residues 1-91 (MSIVGLVSVV…AQLSASFRSS (91 aa)) constitute a chloroplast and chromoplast transit peptide. FAD is bound by residues 104–120 (GAGL…ADAG), Ala-108, 127–128 (ES), Lys-135, 152–153 (HI), and Tyr-158. Arg-293 contacts substrate. Residue Asp-524 participates in FAD binding. Ala-532 serves as a coordination point for substrate. FAD is bound at residue Met-534.

The protein belongs to the carotenoid/retinoid oxidoreductase family. In terms of assembly, homotetramer. Requires FAD as cofactor. As to expression, expressed more strongly in flowers than in leaves.

Its subcellular location is the plastid. It is found in the chloroplast. It localises to the chromoplast. The protein localises to the membrane. It carries out the reaction 2 a plastoquinone + 15-cis-phytoene = 9,9',15-tri-cis-zeta-carotene + 2 a plastoquinol. It participates in carotenoid biosynthesis; lycopene biosynthesis. Its function is as follows. Converts phytoene into zeta-carotene via the intermediary of phytofluene by the symmetrical introduction of two double bonds at the C-11 and C-11' positions of phytoene with a concomitant isomerization of two neighboring double bonds at the C9 and C9' positions from trans to cis. In Narcissus pseudonarcissus (Daffodil), this protein is 15-cis-phytoene desaturase, chloroplastic/chromoplastic (PDS1).